The sequence spans 165 residues: Large ribosomal subunit protein uL10 (165 aa).

This sequence belongs to the universal ribosomal protein uL10 family. As to quaternary structure, part of the ribosomal stalk of the 50S ribosomal subunit. The N-terminus interacts with L11 and the large rRNA to form the base of the stalk. The C-terminus forms an elongated spine to which L12 dimers bind in a sequential fashion forming a multimeric L10(L12)X complex.

Its function is as follows. Forms part of the ribosomal stalk, playing a central role in the interaction of the ribosome with GTP-bound translation factors. This chain is Large ribosomal subunit protein uL10, found in Edwardsiella ictaluri (strain 93-146).